Reading from the N-terminus, the 491-residue chain is Protein SET DOMAIN GROUP 40 (491 aa).

An SET domain is found at 36–278 (HSLSVSDFPD…LGEQVLLCYG (243 aa)).

This sequence belongs to the class V-like SAM-binding methyltransferase superfamily.

The sequence is that of Protein SET DOMAIN GROUP 40 (SDG40) from Arabidopsis thaliana (Mouse-ear cress).